The primary structure comprises 647 residues: Putative lipase YDL109C (647 aa).

Residue Ser-274 is the Charge relay system of the active site. The interval 502-523 is disordered; that stretch reads PPPSPTLYEGTAAKEGETRKTR. Residues 513–523 are compositionally biased toward basic and acidic residues; that stretch reads AAKEGETRKTR.

Belongs to the putative lipase ROG1 family.

Involved in lipid metabolism. The polypeptide is Putative lipase YDL109C (Saccharomyces cerevisiae (strain ATCC 204508 / S288c) (Baker's yeast)).